The primary structure comprises 328 residues: Fructokinase-2 (328 aa).

This sequence belongs to the carbohydrate kinase PfkB family.

The catalysed reaction is D-fructose + ATP = D-fructose 6-phosphate + ADP + H(+). It functions in the pathway glycan biosynthesis; starch biosynthesis. Its function is as follows. May play an important role in maintaining the flux of carbon towards starch formation. In Solanum lycopersicum (Tomato), this protein is Fructokinase-2 (FRK2).